A 183-amino-acid chain; its full sequence is Holliday junction branch migration complex subunit RuvA (183 aa).

The interval 1 to 64 is domain I; the sequence is MVVGIEGIIT…EDSNKFYGFL (64 aa). Positions 65 to 139 are domain II; that stretch reads DKDEQKMFEM…DTRTKLENVS (75 aa). Residue Ser-139 is a region of interest, flexible linker. Positions 139–183 are domain III; sequence SDDKSEALAALLTLGFKQEKIISVLASAQATGTSELIKEALKKLR.

It belongs to the RuvA family. As to quaternary structure, homotetramer. Forms an RuvA(8)-RuvB(12)-Holliday junction (HJ) complex. HJ DNA is sandwiched between 2 RuvA tetramers; dsDNA enters through RuvA and exits via RuvB. An RuvB hexamer assembles on each DNA strand where it exits the tetramer. Each RuvB hexamer is contacted by two RuvA subunits (via domain III) on 2 adjacent RuvB subunits; this complex drives branch migration. In the full resolvosome a probable DNA-RuvA(4)-RuvB(12)-RuvC(2) complex forms which resolves the HJ.

The protein localises to the cytoplasm. Its function is as follows. The RuvA-RuvB-RuvC complex processes Holliday junction (HJ) DNA during genetic recombination and DNA repair, while the RuvA-RuvB complex plays an important role in the rescue of blocked DNA replication forks via replication fork reversal (RFR). RuvA specifically binds to HJ cruciform DNA, conferring on it an open structure. The RuvB hexamer acts as an ATP-dependent pump, pulling dsDNA into and through the RuvAB complex. HJ branch migration allows RuvC to scan DNA until it finds its consensus sequence, where it cleaves and resolves the cruciform DNA. This is Holliday junction branch migration complex subunit RuvA from Campylobacter jejuni subsp. doylei (strain ATCC BAA-1458 / RM4099 / 269.97).